The following is a 131-amino-acid chain: Profilin (131 aa).

It belongs to the profilin family. In terms of assembly, occurs in many kinds of cells as a complex with monomeric actin in a 1:1 ratio.

Its subcellular location is the cytoplasm. The protein localises to the cytoskeleton. Binds to actin and affects the structure of the cytoskeleton. At high concentrations, profilin prevents the polymerization of actin, whereas it enhances it at low concentrations. Has a high affinity for poly-proline. This is Profilin from Citrullus lanatus (Watermelon).